Consider the following 332-residue polypeptide: UDP-galactose/UDP-glucose transporter 1 (332 aa).

The next 8 membrane-spanning stretches (helical) occupy residues 11-31 (ILLL…QGVL), 49-69 (HLAF…YIMI), 80-100 (APWW…AMGI), 112-132 (VLAK…VYGI), 135-155 (TFPE…FALL), 206-226 (IMLG…FGLP), 252-272 (ICGA…GSLA), and 301-317 (WGCV…QIYL). The Di-lysine motif signature appears at 327-332 (KKKQKS).

This sequence belongs to the nucleotide-sugar transporter family. UDP-galactose:UMP antiporter (TC 2.A.7.11) subfamily.

Its subcellular location is the endoplasmic reticulum membrane. In terms of biological role, essential sugar transporter required for the transport of UDP-galactose and UDP-glucose from the cytoplasm into the Golgi and the endoplasmic reticulum, to ensure quality control of protein folding. Essential for pollen development and involved in embryo sac progress. The polypeptide is UDP-galactose/UDP-glucose transporter 1 (Arabidopsis thaliana (Mouse-ear cress)).